Reading from the N-terminus, the 112-residue chain is UPF0235 protein RHE_CH03912 (112 aa).

This sequence belongs to the UPF0235 family.

This Rhizobium etli (strain ATCC 51251 / DSM 11541 / JCM 21823 / NBRC 15573 / CFN 42) protein is UPF0235 protein RHE_CH03912.